The following is a 115-amino-acid chain: Putative TGFB1-induced anti-apoptotic factor 1 (115 aa).

As to expression, not detectable in normal kidney and liver. Up-regulated in chronic and acute allograft rejection: expressed in the inflammatory infiltrate and in tubular epithelial cells.

It is found in the nucleus. In terms of biological role, inhibits the cytotoxic effects of TNF-alpha and overexpressed TNF receptor adapters TRADD, FADD, and RIPK1. Involved in TGF-beta1 inhibition of IkappaB-alpha expression and suppression of TNF-mediated IkappaB-alpha degradation. The sequence is that of Putative TGFB1-induced anti-apoptotic factor 1 (MYO18A) from Homo sapiens (Human).